The chain runs to 140 residues: Large ribosomal subunit protein uL11 (140 aa).

The protein belongs to the universal ribosomal protein uL11 family. In terms of assembly, part of the ribosomal stalk of the 50S ribosomal subunit. Interacts with L10 and the large rRNA to form the base of the stalk. L10 forms an elongated spine to which L12 dimers bind in a sequential fashion forming a multimeric L10(L12)X complex. Post-translationally, one or more lysine residues are methylated.

Its function is as follows. Forms part of the ribosomal stalk which helps the ribosome interact with GTP-bound translation factors. In Nitratidesulfovibrio vulgaris (strain ATCC 29579 / DSM 644 / CCUG 34227 / NCIMB 8303 / VKM B-1760 / Hildenborough) (Desulfovibrio vulgaris), this protein is Large ribosomal subunit protein uL11.